The following is an 81-amino-acid chain: Photosystem I iron-sulfur center (81 aa).

4Fe-4S ferredoxin-type domains follow at residues 2-31 (SHTVKIYDTCIGCTQCVRACPTDVLEMVPW) and 39-68 (VASSPRTEDCVGCKRCETACPTDFLSIRVY). The [4Fe-4S] cluster site is built by C11, C14, C17, C21, C48, C51, C54, and C58.

The cyanobacterial PSI reaction center is composed of one copy each of PsaA,B,C,D,E,F,I,J,K,L,M and X, and forms trimeric complexes. [4Fe-4S] cluster serves as cofactor.

The protein localises to the cellular thylakoid membrane. It catalyses the reaction reduced [plastocyanin] + hnu + oxidized [2Fe-2S]-[ferredoxin] = oxidized [plastocyanin] + reduced [2Fe-2S]-[ferredoxin]. Apoprotein for the two 4Fe-4S centers FA and FB of photosystem I (PSI); essential for photochemical activity. FB is the terminal electron acceptor of PSI, donating electrons to ferredoxin. The C-terminus interacts with PsaA/B/D and helps assemble the protein into the PSI complex. Required for binding of PsaD and PsaE to PSI. PSI is a plastocyanin/cytochrome c6-ferredoxin oxidoreductase, converting photonic excitation into a charge separation, which transfers an electron from the donor P700 chlorophyll pair to the spectroscopically characterized acceptors A0, A1, FX, FA and FB in turn. This is Photosystem I iron-sulfur center from Trichormus variabilis (strain ATCC 29413 / PCC 7937) (Anabaena variabilis).